The following is a 692-amino-acid chain: Methionine--tRNA ligase (692 aa).

A 'HIGH' region motif is present at residues 12–22 (PYANGSFHIGH). Positions 143, 146, 156, and 159 each coordinate Zn(2+). The 'KMSKS' region motif lies at 341–345 (KMSKS). Lys344 lines the ATP pocket. Residues 586-692 (DFAKIDLRIA…PGAQPGMRVR (107 aa)) form the tRNA-binding domain.

Belongs to the class-I aminoacyl-tRNA synthetase family. MetG type 1 subfamily. As to quaternary structure, homodimer. Zn(2+) is required as a cofactor.

The protein localises to the cytoplasm. The catalysed reaction is tRNA(Met) + L-methionine + ATP = L-methionyl-tRNA(Met) + AMP + diphosphate. Its function is as follows. Is required not only for elongation of protein synthesis but also for the initiation of all mRNA translation through initiator tRNA(fMet) aminoacylation. The chain is Methionine--tRNA ligase from Bordetella bronchiseptica (strain ATCC BAA-588 / NCTC 13252 / RB50) (Alcaligenes bronchisepticus).